The following is a 354-amino-acid chain: Replication-associated protein (354 aa).

The 104-residue stretch at 11–114 (LHRNANTFLT…PLAVFERGTF (104 aa)) folds into the CRESS-DNA virus Rep endonuclease domain. An RCR-1 motif is present at residues 18-21 (FLTY). Glu-52, His-60, and His-62 together coordinate a divalent metal cation. The RCR-2 motif lies at 60–62 (HLH). Catalysis depends on Tyr-100, which acts as the For DNA cleavage activity. The RCR-3 motif lies at 100–103 (YILK). Residue Glu-104 coordinates a divalent metal cation. An oligomerization region spans residues 174–186 (SANKLFPDIQEEF). 228 to 235 (GPTRTGKS) serves as a coordination point for ATP. The segment at 251 to 269 (VDWSSYNEDAIYNIVDDIP) is transactivation. The Nuclear localization signal motif lies at 291–302 (KYGKKKKVQMKS).

It belongs to the geminiviridae Rep protein family. Homooligomer. Rep binds to repeated DNA motifs (iterons). Forms the O-complex, which is a Rep-DNA complex involved in the initiation of RCR. Part of the C- and V-complexes which are RepA-Rep-DNA complexes involved in the c-sense and v-sense transcription. It depends on Mg(2+) as a cofactor. Mn(2+) serves as cofactor.

The protein localises to the host nucleus. In terms of biological role, essential for the replication of viral ssDNA. The closed circular ssDNA genome is first converted to a superhelical dsDNA. Rep binds a specific region at the genome origin of replication. It introduces an endonucleolytic nick within the conserved sequence 5'-TAATATTAC-3' in the intergenic region of the genome present in all geminiviruses, thereby initiating the rolling circle replication (RCR). Following cleavage, binds covalently to the 5'-phosphate of DNA as a tyrosyl ester. The cleavage gives rise to a free 3'-OH that serves as a primer for the cellular DNA polymerase. The polymerase synthesizes the (+) strand DNA by rolling circle mechanism. After one round of replication, a Rep-catalyzed nucleotidyl transfer reaction releases a circular single-stranded virus genome, thereby terminating the replication. Displays origin-specific DNA cleavage, nucleotidyl transferase, ATPase and helicase activities. Acts as an inhibitor of C-sense gene transcription. This Avena sativa (Oat) protein is Replication-associated protein.